Here is a 258-residue protein sequence, read N- to C-terminus: MLILISPAKTLDYQSPLTTTRYTLPELLDNSQQLIHEARKLTPPQISSLMRISDKLAGINAARFHDWQPDFTPENARQAILAFKGDVYTGLQAETFSEDDFDFAQQHLRMLSGLYGVLRPLDLMQPYRLEMGIRLENARGKDLYQFWGDIITNKLNEALAAQGDNVVINLASDEYFKSVKPKKLNAEIIKPVFLDEKNGKFKIISFYAKKARGLMSRFIIENRLTKPEQLTGFNSEGYFFDEASSSNGELVFKRYEQR.

This sequence belongs to the UPF0246 family.

The sequence is that of UPF0246 protein YaaA from Escherichia coli O7:K1 (strain IAI39 / ExPEC).